A 544-amino-acid polypeptide reads, in one-letter code: Chaperonin GroEL (544 aa).

ATP is bound by residues 30 to 33 (TLGP), Lys51, 87 to 91 (DGTTT), Gly415, 479 to 481 (NAA), and Asp495.

Belongs to the chaperonin (HSP60) family. As to quaternary structure, forms a cylinder of 14 subunits composed of two heptameric rings stacked back-to-back. Interacts with the co-chaperonin GroES.

It is found in the cytoplasm. It carries out the reaction ATP + H2O + a folded polypeptide = ADP + phosphate + an unfolded polypeptide.. Together with its co-chaperonin GroES, plays an essential role in assisting protein folding. The GroEL-GroES system forms a nano-cage that allows encapsulation of the non-native substrate proteins and provides a physical environment optimized to promote and accelerate protein folding. The chain is Chaperonin GroEL from Francisella tularensis subsp. tularensis (strain SCHU S4 / Schu 4).